The following is a 151-amino-acid chain: 6,7-dimethyl-8-ribityllumazine synthase (151 aa).

Residues phenylalanine 15, 49 to 51 (AVE), and 73 to 75 (AVI) each bind 5-amino-6-(D-ribitylamino)uracil. Residue 78–79 (ET) coordinates (2S)-2-hydroxy-3-oxobutyl phosphate. Histidine 81 functions as the Proton donor in the catalytic mechanism. Phenylalanine 106 is a binding site for 5-amino-6-(D-ribitylamino)uracil. Arginine 120 lines the (2S)-2-hydroxy-3-oxobutyl phosphate pocket.

Belongs to the DMRL synthase family. Forms an icosahedral capsid composed of 60 subunits, arranged as a dodecamer of pentamers.

It carries out the reaction (2S)-2-hydroxy-3-oxobutyl phosphate + 5-amino-6-(D-ribitylamino)uracil = 6,7-dimethyl-8-(1-D-ribityl)lumazine + phosphate + 2 H2O + H(+). It functions in the pathway cofactor biosynthesis; riboflavin biosynthesis; riboflavin from 2-hydroxy-3-oxobutyl phosphate and 5-amino-6-(D-ribitylamino)uracil: step 1/2. Catalyzes the formation of 6,7-dimethyl-8-ribityllumazine by condensation of 5-amino-6-(D-ribitylamino)uracil with 3,4-dihydroxy-2-butanone 4-phosphate. This is the penultimate step in the biosynthesis of riboflavin. The sequence is that of 6,7-dimethyl-8-ribityllumazine synthase from Coxiella burnetii (strain CbuG_Q212) (Coxiella burnetii (strain Q212)).